The chain runs to 263 residues: Ribosomal RNA small subunit methyltransferase A (263 aa).

S-adenosyl-L-methionine is bound by residues Asn13, Thr15, Gly40, Glu61, Asp85, and Asn105.

This sequence belongs to the class I-like SAM-binding methyltransferase superfamily. rRNA adenine N(6)-methyltransferase family. RsmA subfamily.

The protein resides in the cytoplasm. It carries out the reaction adenosine(1518)/adenosine(1519) in 16S rRNA + 4 S-adenosyl-L-methionine = N(6)-dimethyladenosine(1518)/N(6)-dimethyladenosine(1519) in 16S rRNA + 4 S-adenosyl-L-homocysteine + 4 H(+). Its function is as follows. Specifically dimethylates two adjacent adenosines (A1518 and A1519) in the loop of a conserved hairpin near the 3'-end of 16S rRNA in the 30S particle. May play a critical role in biogenesis of 30S subunits. In Mycoplasma pneumoniae (strain ATCC 29342 / M129 / Subtype 1) (Mycoplasmoides pneumoniae), this protein is Ribosomal RNA small subunit methyltransferase A.